Here is a 28-residue protein sequence, read N- to C-terminus: MKLRKILKSMFNNYCKTFKDVPPGNMFR.

The protein resides in the cell inner membrane. This is an uncharacterized protein from Escherichia coli (strain K12).